The primary structure comprises 229 residues: Growth factor receptor-bound protein 2-A (229 aa).

The SH3 1 domain occupies 1–58 (MEAIAKYDFKATADDELSFKRGDVLKVLNEECDQNWYKAELNGKDGFIPKNYIEMKAH). The SH2 domain maps to 60-152 (WFFGKIPRAK…NQQIFLRDIE (93 aa)). The 60-residue stretch at 168–227 (QQPTYVQALFDFDPQEDGELGFRRGDFIQVVDNSDPNWWKGTCLSQTGMFPRNYVTPVNR) folds into the SH3 2 domain.

It belongs to the GRB2/sem-5/DRK family.

Its subcellular location is the nucleus. It is found in the cytoplasm. It localises to the endosome. The protein resides in the golgi apparatus. Adapter protein that provides a critical link between cell surface growth factor receptors and the Ras signaling pathway. Promotes meiotic reinitiation during oocyte maturation. The polypeptide is Growth factor receptor-bound protein 2-A (grb2-a) (Xenopus laevis (African clawed frog)).